Reading from the N-terminus, the 306-residue chain is Methylated RNA-binding protein 1 (306 aa).

A YTH domain is found at 155–290 (SRFFVIKSSS…SIGISIINLF (136 aa)). Residues 161–163 (KSS), N207, and W231 contribute to the RNA site.

Its function is as follows. RNA-binding protein that acts as a post-transcriptional regulator of phosphate metabolism by binding to the 3'-UTR region of PHO4 mRNA, decreasing its stability. Acts by recognizing and binding N6-methyladenosine (m6A)-containing RNAs, a modification present at internal sites of mRNAs and some non-coding RNAs. This Saccharomyces cerevisiae (strain ATCC 204508 / S288c) (Baker's yeast) protein is Methylated RNA-binding protein 1.